We begin with the raw amino-acid sequence, 260 residues long: NAD-capped RNA hydrolase NudC (260 aa).

Substrate-binding residues include Lys-25 and Arg-69. The Zn(2+) site is built by Cys-98 and Cys-101. Substrate is bound at residue Glu-111. Cys-116 and Cys-119 together coordinate Zn(2+). Position 124 (Tyr-124) interacts with substrate. In terms of domain architecture, Nudix hydrolase spans 125 to 248; the sequence is PQIAPCVIVA…TVARRLIEDT (124 aa). The a divalent metal cation site is built by Ala-158, Glu-174, and Glu-178. Residues 159–180 carry the Nudix box motif; it reads GFVEVGETLEQAVSREVLEESN. 192–199 serves as a coordination point for substrate; that stretch reads QPWPFPHS. Glu-219 contacts a divalent metal cation. Residue Ala-241 coordinates substrate.

This sequence belongs to the Nudix hydrolase family. NudC subfamily. As to quaternary structure, homodimer. Mg(2+) is required as a cofactor. Requires Mn(2+) as cofactor. The cofactor is Zn(2+).

It catalyses the reaction a 5'-end NAD(+)-phospho-ribonucleoside in mRNA + H2O = a 5'-end phospho-adenosine-phospho-ribonucleoside in mRNA + beta-nicotinamide D-ribonucleotide + 2 H(+). It carries out the reaction NAD(+) + H2O = beta-nicotinamide D-ribonucleotide + AMP + 2 H(+). The catalysed reaction is NADH + H2O = reduced beta-nicotinamide D-ribonucleotide + AMP + 2 H(+). Functionally, mRNA decapping enzyme that specifically removes the nicotinamide adenine dinucleotide (NAD) cap from a subset of mRNAs by hydrolyzing the diphosphate linkage to produce nicotinamide mononucleotide (NMN) and 5' monophosphate mRNA. The NAD-cap is present at the 5'-end of some mRNAs and stabilizes RNA against 5'-processing. Has preference for mRNAs with a 5'-end purine. Catalyzes the hydrolysis of a broad range of dinucleotide pyrophosphates. The protein is NAD-capped RNA hydrolase NudC of Yersinia pestis bv. Antiqua (strain Antiqua).